Consider the following 899-residue polypeptide: Semaphorin-1A (899 aa).

Residues 1–20 (MLNSHNTNHNNNSASNSNYN) are compositionally biased toward low complexity. The segment at 1–24 (MLNSHNTNHNNNSASNSNYNKGHK) is disordered. Topologically, residues 1–40 (MLNSHNTNHNNNSASNSNYNKGHKMHLKSATAKATIMKHK) are cytoplasmic. Residues 41–61 (LSKFYGYGWMQVFLLLTVLVI) traverse the membrane as a helical segment. Residues 62–657 (GNQSAWQENI…INAQYTVETL (596 aa)) lie on the Extracellular side of the membrane. 3 N-linked (GlcNAc...) asparagine glycosylation sites follow: N63, N90, and N117. The Sema domain maps to 74–543 (KLYVELGPED…TDSQVVAIQL (470 aa)). Intrachain disulfides connect C141–C151 and C169–C178. N-linked (GlcNAc...) asparagine glycosylation is found at N187, N207, and N311. 2 cysteine pairs are disulfide-bonded: C288/C402 and C312/C361. N404 is a glycosylation site (N-linked (GlcNAc...) asparagine). A helical transmembrane segment spans residues 658–678 (VMAVLAGSIFSLLVGFFTGYF). Topologically, residues 679 to 899 (CGRRCHKDED…PKNCSYIYRD (221 aa)) are cytoplasmic. Disordered stretches follow at residues 735–766 (VLLP…QGPN) and 798–899 (VMGD…IYRD). The segment covering 809–827 (FSTTRSVKKAVNNTNTRNR) has biased composition (polar residues). Residues 828–837 (SLGRARRQPP) show a composition bias toward basic residues. The segment covering 847 to 876 (SNSPQQQQQQSQQPHSSSGSSPVMSNSSSS) has biased composition (low complexity).

This sequence belongs to the semaphorin family. As to expression, expressed by subsets of neurons and muscles.

It localises to the cell membrane. Functionally, involved in growth cone guidance through its role in axonal repulsion. Function in neurons is essential for adult survival, motor neuron survival, and is important for climbing behavior and activity. This chain is Semaphorin-1A, found in Drosophila melanogaster (Fruit fly).